A 737-amino-acid chain; its full sequence is 1,4-alpha-glucan branching enzyme GlgB (737 aa).

Asp-419 acts as the Nucleophile in catalysis. The active-site Proton donor is Glu-472.

This sequence belongs to the glycosyl hydrolase 13 family. GlgB subfamily. In terms of assembly, monomer.

The enzyme catalyses Transfers a segment of a (1-&gt;4)-alpha-D-glucan chain to a primary hydroxy group in a similar glucan chain.. The protein operates within glycan biosynthesis; glycogen biosynthesis. In terms of biological role, catalyzes the formation of the alpha-1,6-glucosidic linkages in glycogen by scission of a 1,4-alpha-linked oligosaccharide from growing alpha-1,4-glucan chains and the subsequent attachment of the oligosaccharide to the alpha-1,6 position. In Cellvibrio japonicus (strain Ueda107) (Pseudomonas fluorescens subsp. cellulosa), this protein is 1,4-alpha-glucan branching enzyme GlgB.